The primary structure comprises 145 residues: Synaptojanin-2-binding protein (145 aa).

Topologically, residues 1 to 117 (MNGRVDYLVT…GHRGEGDPSG (117 aa)) are cytoplasmic. A PDZ domain is found at 13 to 100 (EINLTRGPSG…AVSLRVQHRL (88 aa)). A helical membrane pass occupies residues 118–138 (IPIFMVLVPVFALTMVAAWAF). The Mitochondrial intermembrane portion of the chain corresponds to 139 to 145 (MRYRQQL).

Binds (via the PDZ domain) to isoform 2A of SYNJ2 (via the unique motif in the C-terminus). Interacts (via C-terminus) with RALBP1. Interacts (via PDZ domain) with ACVR2A (via C-terminus) and ACVR2B (via C-terminus). Forms a ternary complex with ACVR2A and RALBP1. Interacts with MAPK12. Interacts with DLL1; enhances DLL1 protein stability, and promotes notch signaling in endothelial cells.

Its subcellular location is the mitochondrion outer membrane. Its function is as follows. Regulates endocytosis of activin type 2 receptor kinases through the Ral/RALBP1-dependent pathway and may be involved in suppression of activin-induced signal transduction. This is Synaptojanin-2-binding protein (SYNJ2BP) from Homo sapiens (Human).